We begin with the raw amino-acid sequence, 86 residues long: Cell division topological specificity factor (86 aa).

It belongs to the MinE family.

In terms of biological role, prevents the cell division inhibition by proteins MinC and MinD at internal division sites while permitting inhibition at polar sites. This ensures cell division at the proper site by restricting the formation of a division septum at the midpoint of the long axis of the cell. The polypeptide is Cell division topological specificity factor (Rhizobium rhizogenes (strain K84 / ATCC BAA-868) (Agrobacterium radiobacter)).